Here is a 937-residue protein sequence, read N- to C-terminus: C-1-tetrahydrofolate synthase, cytoplasmic (937 aa).

A methylenetetrahydrofolate dehydrogenase and cyclohydrolase region spans residues 1 to 309 (MALLLEGTSL…TLLPLKLQTP (309 aa)). Residues 50–54 (YVRMK) and 97–99 (VQL) each bind substrate. NADP(+) contacts are provided by residues 168–170 (GRS) and Ser-193. 268 to 272 (PGSVG) contributes to the substrate binding site. Residues 310-937 (VPSDIEIARS…AENGDIVGLS (628 aa)) form a formyltetrahydrofolate synthetase region. 374-381 (TPFGEGKS) lines the ATP pocket.

The protein in the N-terminal section; belongs to the tetrahydrofolate dehydrogenase/cyclohydrolase family. In the C-terminal section; belongs to the formate--tetrahydrofolate ligase family. As to quaternary structure, homodimer.

Its subcellular location is the cytoplasm. The catalysed reaction is (6R)-5,10-methylene-5,6,7,8-tetrahydrofolate + NADP(+) = (6R)-5,10-methenyltetrahydrofolate + NADPH. It catalyses the reaction (6R)-5,10-methenyltetrahydrofolate + H2O = (6R)-10-formyltetrahydrofolate + H(+). The enzyme catalyses (6S)-5,6,7,8-tetrahydrofolate + formate + ATP = (6R)-10-formyltetrahydrofolate + ADP + phosphate. It participates in one-carbon metabolism; tetrahydrofolate interconversion. The sequence is that of C-1-tetrahydrofolate synthase, cytoplasmic from Schizosaccharomyces pombe (strain 972 / ATCC 24843) (Fission yeast).